Here is a 1764-residue protein sequence, read N- to C-terminus: Latent-transforming growth factor beta-binding protein 2 (1764 aa).

The N-terminal stretch at 1–35 (MRAPTTVRCSGRIQRARWRGFLPLVLALLMGTSHA) is a signal peptide. Residues 80–140 (PGLSPSEWNQ…PPAARTAHSV (61 aa)) are disordered. The segment at 94–115 (IPGRLAEAEARRPSRAQQLRRV) is heparin-binding. Over residues 108–128 (RAQQLRRVQSPVQTRRSNPRG) the composition is skewed to polar residues. Residue Asn-175 is glycosylated (N-linked (GlcNAc...) asparagine). An EGF-like 1 domain is found at 181-213 (IKPVCQPPCQNRGSCSRPQLCICRSGFRGARCE). Disulfide bonds link Cys-185/Cys-195, Cys-189/Cys-201, and Cys-203/Cys-212. Residues 220–279 (EFDPQNARPVPRRSVEGAPGPHRSSEARGSLVTRIQPLLPPLPPPPSRTLSQTRPLQQHA) are disordered. The heparin-binding stretch occupies residues 226 to 243 (ARPVPRRSVEGAPGPHRS). Positions 257 to 266 (LLPPLPPPPS) are enriched in pro residues. A glycan (N-linked (GlcNAc...) asparagine) is linked at Asn-330. A heparin-binding site is contributed by 331–341 (LTEKIKKIKVV). An EGF-like 2 domain is found at 383–415 (RIYFCQIPCLNGGRCIGRDECWCPANSTGKFCH). 3 disulfide bridges follow: Cys-387–Cys-397, Cys-391–Cys-403, and Cys-405–Cys-414. An N-linked (GlcNAc...) asparagine glycan is attached at Asn-408. Residues 484-529 (EVDPVPEDNSVETRASHRPHGSSGHSHWASNSIPARAGEAPRPPPV) are disordered. Phosphoserine is present on Ser-493. The 53-residue stretch at 538–590 (GQCYLSTVNGQCANPLGELTSQEDCCGSVGTSWGVTSCAPCPPRPAFPVIENG) folds into the TB 1 domain. 3 disulfides stabilise this stretch: Cys-540/Cys-562, Cys-549/Cys-575, and Cys-563/Cys-578. Asn-602 carries N-linked (GlcNAc...) asparagine glycosylation. The EGF-like 3; calcium-binding domain occupies 608–648 (DINECLTLGLCKDSECVNTRGSYLCTCRPGLMLDPSRSRCV). Intrachain disulfides connect Cys-612–Cys-623, Cys-618–Cys-632, Cys-634–Cys-647, Cys-660–Cys-682, Cys-669–Cys-695, Cys-683–Cys-698, and Cys-684–Cys-710. Residues 658 to 710 (GLCYRSMVSGTCTLPLVQRITKQICCCSRVGKAWGSKCEHCPLPGTEAFREIC) enclose the TB 2 domain. 2 disordered regions span residues 729-759 (KAEEEELASPVREQRQQSSGPPPGAAERQPL) and 786-809 (SAPHLPARVPGDATGRPTPSLPGQ). Positions 834-876 (GFDPCFAGASNICGPGTCVKLPNGYRCVCSPGYQLHPSQDYCT) constitute an EGF-like 4 domain. Intrachain disulfides connect Cys-838/Cys-851, Cys-846/Cys-860, Cys-862/Cys-875, Cys-881/Cys-892, Cys-886/Cys-901, Cys-903/Cys-918, Cys-924/Cys-935, Cys-930/Cys-944, Cys-946/Cys-958, Cys-964/Cys-975, Cys-970/Cys-984, Cys-987/Cys-998, Cys-1004/Cys-1015, Cys-1010/Cys-1024, Cys-1026/Cys-1039, Cys-1045/Cys-1056, Cys-1051/Cys-1065, Cys-1068/Cys-1081, Cys-1087/Cys-1098, Cys-1093/Cys-1107, Cys-1110/Cys-1123, Cys-1129/Cys-1141, Cys-1136/Cys-1150, Cys-1152/Cys-1164, Cys-1170/Cys-1182, Cys-1176/Cys-1191, Cys-1193/Cys-1206, Cys-1212/Cys-1223, Cys-1218/Cys-1232, Cys-1234/Cys-1247, Cys-1253/Cys-1265, Cys-1259/Cys-1274, Cys-1276/Cys-1289, Cys-1295/Cys-1307, Cys-1302/Cys-1316, Cys-1318/Cys-1332, Cys-1359/Cys-1382, Cys-1369/Cys-1394, Cys-1383/Cys-1397, Cys-1435/Cys-1448, Cys-1443/Cys-1457, Cys-1459/Cys-1472, Cys-1478/Cys-1488, Cys-1483/Cys-1497, and Cys-1499/Cys-1512. Residues 877 to 919 (DDNECLRNPCEGRGRCVNSVGSYSCLCYPGYTLATLGDTQECQ) form the EGF-like 5; calcium-binding domain. Positions 920–959 (DVDECEQPGVCSGGRCSNTEGSYHCECDQGYVMVRRGHCQ) constitute an EGF-like 6; calcium-binding domain. In terms of domain architecture, EGF-like 7; calcium-binding spans 960–999 (DINECRHPGTCPDGRCVNSPGSYTCLACEEGYIGQSGNCV). Positions 1000-1040 (DMNECLTPGICAHGRCINMEGSFRCSCEPGYELTPDKKGCR) constitute an EGF-like 8; calcium-binding domain. An EGF-like 9; calcium-binding domain is found at 1041–1082 (DVDECASRASCPTGLCLNTEGSFTCSACQSGYWVNEDGTACE). The region spanning 1083–1124 (DLDECAFPGVCPTGVCTNTVGSFSCKDCDRGFRPSPLGNSCE) is the EGF-like 10; calcium-binding domain. Residues 1125–1165 (DVDECEGPQNSCLGGECKNTDGSYQCLCPQGFQLANGTVCE) enclose the EGF-like 11; calcium-binding domain. An N-linked (GlcNAc...) asparagine glycan is attached at Asn-1160. An EGF-like 12; calcium-binding domain is found at 1166-1207 (DVDECVGEEHCAPHGECLNSPGSFFCLCAPGFASAEGGTRCQ). Residues 1208 to 1248 (DVDECATTEPCLGGHCVNTEGSFNCLCETGFQPAPDSGECV) enclose the EGF-like 13; calcium-binding domain. The EGF-like 15; calcium-binding domain occupies 1249-1290 (DIDECANDTVCGNHGFCDNTDGSFRCLCDQGFETSPSGWECV). The N-linked (GlcNAc...) asparagine glycan is linked to Asn-1255. Positions 1291–1333 (DVNECELMLAVCGDALCENVEGSFLCLCASDLEEYDAEEGHCR) constitute an EGF-like 16; calcium-binding domain. Positions 1357-1409 (MECYAEHNGGPPCSQILGQNSTQAECCSTQGARWGETCDPCPSEDSVEFSELC) constitute a TB 3 domain. An N-linked (GlcNAc...) asparagine glycan is attached at Asn-1376. In terms of domain architecture, EGF-like 17; calcium-binding spans 1431 to 1473 (DADECILFGPALCQNGRCLNTVPGYICLCNPGYHYDAVSRKCQ). Residues 1474-1513 (DHNECQDLACENGECVNTEGSFHCFCSPPLILDLSGQRCV) form the EGF-like 18; calcium-binding domain. The N-linked (GlcNAc...) asparagine glycan is linked to Asn-1514. One can recognise a TB 4 domain in the interval 1530 to 1582 (DICWKKVTNDVCSQPLRGHHTTYTECCCQDGEAWSQQCALCPPRSSEVYAQLC). 10 disulfide bridges follow: Cys-1532–Cys-1555, Cys-1541–Cys-1567, Cys-1556–Cys-1570, Cys-1557–Cys-1582, Cys-1680–Cys-1691, Cys-1686–Cys-1700, Cys-1702–Cys-1715, Cys-1721–Cys-1736, Cys-1731–Cys-1745, and Cys-1747–Cys-1760. Residues 1585 to 1764 (ARIEAEREAG…PGPPHCAAKE (180 aa)) are C-terminal domain. Residues 1676 to 1716 (QAEECGILNGCENGRCVRVREGYTCDCFEGFQLDTALMACV) form the EGF-like 19; calcium-binding domain. One can recognise an EGF-like 20; calcium-binding domain in the interval 1717–1761 (DVNECEDLNGAARLCAHGHCENTEGSYRCHCSPGYVAEPGPPHCA).

This sequence belongs to the LTBP family. As to quaternary structure, forms part of the large latent transforming growth factor beta precursor complex; removal is essential for activation of complex. Interacts with SDC4. Interacts (via C-terminal domain) with FBN1 (via N-terminal domain) in a Ca(+2)-dependent manner. Post-translationally, N-Glycosylated. In terms of processing, contains hydroxylated asparagine residues. Expressed in cortical astrocytes and glioma cells. Expression is up-regulated by TGFB1.

The protein localises to the secreted. It localises to the extracellular space. Its subcellular location is the extracellular matrix. Its function is as follows. May play an integral structural role in elastic-fiber architectural organization and/or assembly. In Rattus norvegicus (Rat), this protein is Latent-transforming growth factor beta-binding protein 2 (Ltbp2).